The following is a 2035-amino-acid chain: Proline-rich protein 12 (2035 aa).

Disordered stretches follow at residues 210–280, 292–311, 329–584, and 645–685; these read GGGV…ERAL, RPAS…LQHY, CSPL…GAPG, and QAPS…GTPY. Over residues 223 to 240 the composition is skewed to pro residues; that stretch reads QTPPYRPGPPDPPPPPRH. Residues 249-261 are compositionally biased toward low complexity; it reads ASSSAATAAEPSS. Positions 296–305 are enriched in pro residues; it reads AQPPPPPPPA. 2 positions are modified to phosphoserine: S330 and S338. Residues 338 to 364 show a composition bias toward low complexity; sequence SPGAGEPSKGGPSGATAGAAGRATGPE. The segment covering 365–377 has biased composition (gly residues); the sequence is TAGGGAAGGGGGY. 2 stretches are compositionally biased toward low complexity: residues 408 to 429 and 437 to 455; these read STAT…AGKA and SQAY…QAYG. Over residues 476-487 the composition is skewed to pro residues; the sequence is PPQPPSGPPPPG. Polar residues-rich tracts occupy residues 490–501 and 520–534; these read TCQSYSPDQLQG and GLPT…STGH. Positions 540–555 are enriched in gly residues; sequence GHGGGWGPSSLGGGGE. At S648 the chain carries Phosphoserine. Gly residues predominate over residues 670–681; it reads GLGGSGGAGGAP. T735 is subject to Phosphothreonine. Disordered regions lie at residues 755-844, 851-870, 879-920, and 946-1061; these read AFLQ…PLQL, HGLE…SLEP, GALE…APRF, and EMFG…CSTK. Residues 830–841 show a composition bias toward pro residues; that stretch reads PQPPPPPPPPMP. The residue at position 859 (S859) is a Phosphoserine. The segment covering 1031 to 1046 has biased composition (pro residues); that stretch reads SAPPPPPPPPPPPPVS. Phosphoserine occurs at positions 1070 and 1128. 4 disordered regions span residues 1112 to 1244, 1288 to 1355, 1367 to 1567, and 1662 to 1839; these read RRLP…DHNS, PLYQ…SPCK, TLPS…GEGI, and HRPP…PGRL. A compositionally biased stretch (basic residues) spans 1190 to 1199; that stretch reads KPRGRGRGRG. Basic and acidic residues predominate over residues 1200 to 1214; sequence RKAEEMGGTRLEPLK. Position 1214 is an N6-acetyllysine (K1214). Residue T1295 is modified to Phosphothreonine. Position 1299 is a phosphoserine (S1299). Residues 1314–1329 show a composition bias toward pro residues; it reads QPPPPTVPTVPHPAPS. S1372, S1373, and S1378 each carry phosphoserine. A compositionally biased stretch (pro residues) spans 1449–1529; the sequence is PPTPPPAPTP…PPEEPPAPSP (81 aa). The span at 1535-1547 shows a compositional bias: basic and acidic residues; that stretch reads PDARPLHLAKKQE. T1555 is subject to Phosphothreonine. Phosphoserine is present on S1562. Positions 1698–1709 are enriched in basic and acidic residues; that stretch reads ETPEKMTSEKPP. T1699 is subject to Phosphothreonine. The span at 1710–1730 shows a compositional bias: pro residues; the sequence is EPAPEPAVPEPPAPEKPSPPR. Residues 1731–1768 show a composition bias toward basic and acidic residues; sequence PVEKEKEKEKEKEKEKERVTRPLRSERATSGRQMRTDR. Residues 1769 to 1779 are compositionally biased toward polar residues; sequence SLATGQSTTSR. Over residues 1817–1828 the composition is skewed to low complexity; it reads SSSDSESSPGAP. S1924 is subject to Phosphoserine.

Expressed in brain.

The protein resides in the nucleus. It localises to the postsynaptic density. The protein localises to the synapse. Its subcellular location is the synaptosome. This Mus musculus (Mouse) protein is Proline-rich protein 12.